The following is a 204-amino-acid chain: MGEPAFTSFPSLPVLGKLKRNMMPWALQKKREIHMAKAHRRRAARSALPMRLTSCIFRRPVTRIRSHPDNQVRRRKGDEHLEKPQQLCAYRRLQALQPCSSQGEGSSPLHLESVLSILAPGTAGESLDRAGAERVRSPLEPTPGRFPAVAGGPTPGMGCQLPPPLSGQLVTPADIRRQARRVKKARERLAKALQADRLARRAEM.

Over residues 126–137 (SLDRAGAERVRS) the composition is skewed to basic and acidic residues. The interval 126–145 (SLDRAGAERVRSPLEPTPGR) is disordered.

Belongs to the MBD3L family.

The protein is Methyl-CpG-binding domain protein 3-like 2B of Homo sapiens (Human).